Here is a 445-residue protein sequence, read N- to C-terminus: tRNA-2-methylthio-N(6)-dimethylallyladenosine synthase (445 aa).

Positions K7–S121 constitute an MTTase N-terminal domain. Positions 16, 52, 84, 156, 160, and 163 each coordinate [4Fe-4S] cluster. The region spanning R142 to D374 is the Radical SAM core domain. In terms of domain architecture, TRAM spans Q377–D438.

The protein belongs to the methylthiotransferase family. MiaB subfamily. In terms of assembly, monomer. The cofactor is [4Fe-4S] cluster.

It localises to the cytoplasm. The enzyme catalyses N(6)-dimethylallyladenosine(37) in tRNA + (sulfur carrier)-SH + AH2 + 2 S-adenosyl-L-methionine = 2-methylsulfanyl-N(6)-dimethylallyladenosine(37) in tRNA + (sulfur carrier)-H + 5'-deoxyadenosine + L-methionine + A + S-adenosyl-L-homocysteine + 2 H(+). Catalyzes the methylthiolation of N6-(dimethylallyl)adenosine (i(6)A), leading to the formation of 2-methylthio-N6-(dimethylallyl)adenosine (ms(2)i(6)A) at position 37 in tRNAs that read codons beginning with uridine. This is tRNA-2-methylthio-N(6)-dimethylallyladenosine synthase from Zymomonas mobilis subsp. mobilis (strain ATCC 31821 / ZM4 / CP4).